The sequence spans 411 residues: UPF0597 protein Fnod_1278 (411 aa).

This sequence belongs to the UPF0597 family.

This Fervidobacterium nodosum (strain ATCC 35602 / DSM 5306 / Rt17-B1) protein is UPF0597 protein Fnod_1278.